A 677-amino-acid chain; its full sequence is Mitochondrial disaggregase (677 aa).

A mitochondrion-targeting transit peptide spans 1–57 (MMLSAVLRRTAPAPRLFLGLIKSPSLQSRGGAYNRSVITGDRGEPQRLRTAAWVRPG). A disordered region spans residues 64 to 103 (PGRGAATGGRRGERTEIPYLTAASSGRGPSPEETLPGQDS). Residues 92-126 (PSPEETLPGQDSWNGVPNKAGLGMWALAMALVVQC) are autoinhibitory. 4 ANK repeats span residues 133–162 (NKDA…DVNA), 166–195 (LGWT…DPNL), 235–265 (KGCT…PLQR), and 268–297 (MGHT…EKQR). Residues His-316, Ile-318, Ser-353, Gly-354, Ile-355, Gly-356, Lys-357, Thr-358, Glu-425, and Asn-466 each contribute to the ATP site. The tract at residues 477 to 505 (LQLRQEALEMSRNRIAENLGDVQISDKIT) is regulatory; slows ATPase and disaggregase activities. Arg-531 contacts ATP. Lys-559 is modified (N6-acetyllysine). Arg-590 provides a ligand contact to ATP.

This sequence belongs to the ClpA/ClpB family. Homododecamer when substrate-bound; the homododecamer consists of 2 homohexamers stacked head-to-head via ANK repeat-mediated interactions. The active substrate-bound form is likely to exist in a dynamic equilibrium between homohexamers and homododecamers. Homotetradecamer in the unbound state which is remodeled upon substrate binding into the homododecamer. Interacts with PHB and PHB2. Interacts with MAVS; the interaction is enhanced by Sendai virus infection. Post-translationally, proteolytically cleaved by protease PARL. ATP-dependent protein disaggregase activity is stimulated by PARL-mediated cleavage of the N-terminal autoinhibitory peptide.

The protein localises to the mitochondrion intermembrane space. It catalyses the reaction ATP + H2O = ADP + phosphate + H(+). Disaggregase activity is inhibited by ADP. Its function is as follows. Functions as a regulatory ATPase and participates in secretion/protein trafficking process. Has ATP-dependent protein disaggregase activity and is required to maintain the solubility of key mitochondrial proteins. Involved in mitochondrial-mediated antiviral innate immunity, activates RIG-I-mediated signal transduction and production of IFNB1 and pro-inflammatory cytokine IL6. Plays a role in granulocyte differentiation. This is Mitochondrial disaggregase from Rattus norvegicus (Rat).